The chain runs to 542 residues: Probable quinate permease (542 aa).

Residues 1–22 (MSILALVEDRPTPKEVYNWRIY) are Cytoplasmic-facing. A helical membrane pass occupies residues 23–43 (LLAAVASFTSCMIGYDSAFIG). The Extracellular segment spans residues 44-66 (TTLALSSFREEFGFNTMSKTAVN). The chain crosses the membrane as a helical span at residues 67 to 87 (LVSANIVSCYQAGAFFGAFLA). Residues 88–97 (YPVGHFWGRK) lie on the Cytoplasmic side of the membrane. Residues 98–118 (WGLLFSGAIFTLGAGLMLGAD) traverse the membrane as a helical segment. The Extracellular segment spans residues 119 to 130 (GDRGLGLLYGGR). Residues 131-151 (VLAGLGVGAGSNITPIYISEM) traverse the membrane as a helical segment. Residues 152 to 159 (APPSIRGR) are Cytoplasmic-facing. A helical transmembrane segment spans residues 160 to 180 (LVGVYELGWQIGGLVGFWINY). Over 181 to 193 (GVSETLAPSHKQW) the chain is Extracellular. Residues 194–214 (IIPFAVQLIPSGLLLIGAVFL) traverse the membrane as a helical segment. Residues 215–285 (KESPRWLFSR…AGTNKKVMYR (71 aa)) are Cytoplasmic-facing. Residues 286-306 (LFLGSMLFFWQNGSGINAINY) form a helical membrane-spanning segment. Over 307-325 (YSPTVFKSIGLQGANTSMF) the chain is Extracellular. Residues 326 to 346 (STGIFGVVKTVVTFVWLLYLI) traverse the membrane as a helical segment. Topologically, residues 347 to 352 (DRLGRR) are cytoplasmic. A helical transmembrane segment spans residues 353–373 (LLLLIGAAGASVCLFIVGAYI). The Extracellular portion of the chain corresponds to 374–387 (KIADPASNPTQEMT). Residues 388 to 408 (GGGIAAMFFFYLYTVFYTPSW) form a helical membrane-spanning segment. The Cytoplasmic portion of the chain corresponds to 409-456 (NGTPWVMNSEMFEPNMRSLAQACAAASNWFWNFLISRFTPQMFAKMEY). The helical transmembrane segment at 457–477 (GVWFFFASLMVLSIVFVFFLL) threads the bilayer. At 478 to 542 (PETKGIPLES…EHLSEDLPKV (65 aa)) the chain is on the extracellular side. The tract at residues 519–542 (IEESGYSKTGDQQVEHLSEDLPKV) is disordered. Residues 531–542 (QVEHLSEDLPKV) show a composition bias toward basic and acidic residues.

It belongs to the major facilitator superfamily. Sugar transporter (TC 2.A.1.1) family. In terms of assembly, interacts with creB. Ubiquitinated. Deubiquitinated by creB, probably to control its activity or amount.

The protein resides in the cell membrane. In terms of biological role, integral membrane transporter that imports quinic acid to be catabolized as a carbon source. The polypeptide is Probable quinate permease (qutD) (Neosartorya fischeri (strain ATCC 1020 / DSM 3700 / CBS 544.65 / FGSC A1164 / JCM 1740 / NRRL 181 / WB 181) (Aspergillus fischerianus)).